A 129-amino-acid chain; its full sequence is D-ribose pyranase (129 aa).

The Proton donor role is filled by His20. Residues Asp28, His96, and 118–120 (YAN) each bind substrate.

This sequence belongs to the RbsD / FucU family. RbsD subfamily. In terms of assembly, homodecamer.

It localises to the cytoplasm. The catalysed reaction is beta-D-ribopyranose = beta-D-ribofuranose. The protein operates within carbohydrate metabolism; D-ribose degradation; D-ribose 5-phosphate from beta-D-ribopyranose: step 1/2. Its function is as follows. Catalyzes the interconversion of beta-pyran and beta-furan forms of D-ribose. The protein is D-ribose pyranase of Streptomyces coelicolor (strain ATCC BAA-471 / A3(2) / M145).